A 311-amino-acid polypeptide reads, in one-letter code: Ribonuclease HIII (311 aa).

An RNase H type-2 domain is found at 95–311 (MSIVGSDEVG…NTEKAFRLLK (217 aa)). A divalent metal cation-binding residues include aspartate 101, glutamate 102, and aspartate 206.

This sequence belongs to the RNase HII family. RnhC subfamily. The cofactor is Mn(2+). Requires Mg(2+) as cofactor.

The protein localises to the cytoplasm. The enzyme catalyses Endonucleolytic cleavage to 5'-phosphomonoester.. Endonuclease that specifically degrades the RNA of RNA-DNA hybrids. In Bacillus cereus (strain 03BB102), this protein is Ribonuclease HIII.